The sequence spans 264 residues: MSDGGAPTVEFLRHGGRIAMAHRGFTSFRLPMNSMGAFQEAAKLGFRYIETDVRATRDGVAVILHDRRLAPGVGLSGAVDRLDWRDVRKAQLGAGQSIPTLEDLLTALPDMRVNIDIKAASAIEPTVNVIERCNAHNRVLIGSFSERRRRRALRLLTKRVASSAGTGALLAWLTARPLGSRAYAWRMMRDIDCVQLPSRLGGVPVITPARVRGFHAAGRQVHAWTVDEPDVMHTLLDMDVDGIITDRADLLRDVLIARGEWDGA.

Residues 17-255 (RIAMAHRGFT…DRADLLRDVL (239 aa)) enclose the GP-PDE domain. The active-site Proton acceptor is His-22. A divalent metal cation-binding residues include Glu-50, Asp-52, and His-65. The Proton donor role is filled by His-65.

Belongs to the glycerophosphoryl diester phosphodiesterase family. It depends on a divalent metal cation as a cofactor.

The catalysed reaction is a sn-glycero-3-phosphodiester + H2O = an alcohol + sn-glycerol 3-phosphate + H(+). Its function is as follows. Glycerophosphodiester phosphodiesterase hydrolyzes glycerophosphodiesters into glycerol-3-phosphate (G3P) and the corresponding alcohol. The protein is Probable glycerophosphodiester phosphodiesterase 2 of Mycobacterium tuberculosis (strain ATCC 25618 / H37Rv).